We begin with the raw amino-acid sequence, 40 residues long: MKVRNSLRALKARPGAQVVRRRGVTYVINKKDPRFKARQG.

It belongs to the bacterial ribosomal protein bL36 family.

This Streptomyces coelicolor (strain ATCC BAA-471 / A3(2) / M145) protein is Large ribosomal subunit protein bL36B.